The primary structure comprises 156 residues: Cellulose synthase operon protein D (156 aa).

The protein operates within glycan metabolism; bacterial cellulose biosynthesis. Functionally, may have a major role in the perfection of crystallization, involved either in the pore structure itself or in the organization of the pores within the linear array of terminal synthesizing complexes (TCs). The chain is Cellulose synthase operon protein D from Komagataeibacter sucrofermentans (strain ATCC 700178 / DSM 15973 / CECT 7291 / JCM 9730 / LMG 18788 / BPR 2001) (Acetobacter xylinus subsp. sucrofermentans).